A 29-amino-acid polypeptide reads, in one-letter code: Lambda-theraphotoxin-Ec2c (29 aa).

3 disulfide bridges follow: Cys2–Cys16, Cys9–Cys21, and Cys15–Cys25.

The protein belongs to the neurotoxin 30 (phrixotoxin) family. In terms of tissue distribution, expressed by the venom gland.

The protein resides in the secreted. In terms of biological role, both insecticidal and vertebrate neurotoxin that potently blocks insect calcium-activated potassium (BKCa) channels (Slo-type) in cockroach dorsal unpaired median (DUM) neurons (IC(50)=24.6 nM). This occurs in the absence of any shifts in the voltage dependence of activation. May interact with the turret and/or loop region of the external entrance to the channel and does not project deeply into the pore of the channel. Also shows toxicity to mice by introcerebroventicular injection. This is Lambda-theraphotoxin-Ec2c from Eucratoscelus constrictus (African red-rump baboon spider).